Consider the following 376-residue polypeptide: Queuine tRNA-ribosyltransferase (376 aa).

D93 serves as the catalytic Proton acceptor. Residues 93 to 97 (DSGGF), D147, Q190, and G217 contribute to the substrate site. Residues 248 to 254 (GVGKPDD) are RNA binding. The active-site Nucleophile is the D267. Residues C305, C307, C310, and H336 each contribute to the Zn(2+) site.

It belongs to the queuine tRNA-ribosyltransferase family. Homodimer. Within each dimer, one monomer is responsible for RNA recognition and catalysis, while the other monomer binds to the replacement base PreQ1. The cofactor is Zn(2+).

The catalysed reaction is 7-aminomethyl-7-carbaguanine + guanosine(34) in tRNA = 7-aminomethyl-7-carbaguanosine(34) in tRNA + guanine. Its pathway is tRNA modification; tRNA-queuosine biosynthesis. Catalyzes the base-exchange of a guanine (G) residue with the queuine precursor 7-aminomethyl-7-deazaguanine (PreQ1) at position 34 (anticodon wobble position) in tRNAs with GU(N) anticodons (tRNA-Asp, -Asn, -His and -Tyr). Catalysis occurs through a double-displacement mechanism. The nucleophile active site attacks the C1' of nucleotide 34 to detach the guanine base from the RNA, forming a covalent enzyme-RNA intermediate. The proton acceptor active site deprotonates the incoming PreQ1, allowing a nucleophilic attack on the C1' of the ribose to form the product. After dissociation, two additional enzymatic reactions on the tRNA convert PreQ1 to queuine (Q), resulting in the hypermodified nucleoside queuosine (7-(((4,5-cis-dihydroxy-2-cyclopenten-1-yl)amino)methyl)-7-deazaguanosine). The chain is Queuine tRNA-ribosyltransferase from Cereibacter sphaeroides (strain ATCC 17029 / ATH 2.4.9) (Rhodobacter sphaeroides).